The sequence spans 296 residues: Transmembrane O-methyltransferase (296 aa).

Residues 36–56 traverse the membrane as a helical segment; sequence VGTMSPAIALAFLPLVVTLLV. Residues Glu142, 144-145, Ser150, Glu168, and Ser198 each bind S-adenosyl-L-methionine; that span reads GT.

The protein belongs to the class I-like SAM-binding methyltransferase superfamily. Cation-dependent O-methyltransferase family. Interacts with LHFPL5, PCDH15, TMC1, TMC2 and TMIE. Interacts directly with TMC1. The interaction of TOMT with TMC1 and TMC2 is required for the transportation of TMC1/2 into the stereocilia of hair cells.

It is found in the membrane. The protein resides in the cytoplasm. The protein localises to the endoplasmic reticulum. It catalyses the reaction a catechol + S-adenosyl-L-methionine = a guaiacol + S-adenosyl-L-homocysteine + H(+). Its function is as follows. Catalyzes the O-methylation, and thereby the inactivation, of catecholamine neurotransmitters and catechol hormones. Required for auditory function. Component of the cochlear hair cell's mechanotransduction (MET) machinery. Involved in the assembly of the asymmetric tip-link MET complex. Required for transportation of TMC1 and TMC2 proteins into the mechanically sensitive stereocilia of the hair cells. The function in MET is independent of the enzymatic activity. This Macaca mulatta (Rhesus macaque) protein is Transmembrane O-methyltransferase.